Here is a 341-residue protein sequence, read N- to C-terminus: Barley B recombinant-like protein A (341 aa).

Residues 48–62 (HQHQQHVPHHHHQPH) show a composition bias toward basic residues. 2 disordered regions span residues 48 to 95 (HQHQ…MNFA) and 150 to 234 (MQQQ…RKNI). The span at 68–77 (GANGNANGGA) shows a compositional bias: low complexity. The span at 78–90 (MPPPPATEAPPSM) shows a compositional bias: pro residues. A compositionally biased stretch (basic residues) spans 190 to 211 (PKKRQQGRQPKVPRAKKPKKSA).

It belongs to the BBR/BPC family.

The protein localises to the nucleus. In terms of biological role, transcriptional regulator that specifically binds to GA-rich elements (GAGA-repeats) present in regulatory sequences of genes involved in developmental processes. The polypeptide is Barley B recombinant-like protein A (Oryza sativa subsp. japonica (Rice)).